The following is a 252-amino-acid chain: Low-density lipoprotein receptor-related protein 5-like protein (252 aa).

LDL-receptor class B repeat units lie at residues 3 to 45 (GHVY…NWVA), 46 to 88 (RSLY…HPEM), 89 to 132 (GLTY…DLQE), 133 to 175 (GKLY…LGDF), and 176 to 218 (IYWT…DKVV). A disordered region spans residues 223–247 (HADRNGGAATCASSRPTQPGLAAPS).

The polypeptide is Low-density lipoprotein receptor-related protein 5-like protein (LRP5L) (Homo sapiens (Human)).